The following is a 528-amino-acid chain: ATP synthase subunit alpha 1 (528 aa).

An ATP-binding site is contributed by 169-176; sequence GDRQTGKT.

Belongs to the ATPase alpha/beta chains family. F-type ATPases have 2 components, CF(1) - the catalytic core - and CF(0) - the membrane proton channel. CF(1) has five subunits: alpha(3), beta(3), gamma(1), delta(1), epsilon(1). CF(0) has three main subunits: a(1), b(2) and c(9-12). The alpha and beta chains form an alternating ring which encloses part of the gamma chain. CF(1) is attached to CF(0) by a central stalk formed by the gamma and epsilon chains, while a peripheral stalk is formed by the delta and b chains.

The protein resides in the cell membrane. It carries out the reaction ATP + H2O + 4 H(+)(in) = ADP + phosphate + 5 H(+)(out). Its function is as follows. Produces ATP from ADP in the presence of a proton gradient across the membrane. The alpha chain is a regulatory subunit. In Mycoplasmopsis pulmonis (strain UAB CTIP) (Mycoplasma pulmonis), this protein is ATP synthase subunit alpha 1.